A 475-amino-acid chain; its full sequence is Methylenetetrahydrofolate--tRNA-(uracil-5-)-methyltransferase TrmFO (475 aa).

9–14 serves as a coordination point for FAD; that stretch reads GGGLAG. Positions 427–447 are disordered; it reads APRNETGRRLRGPEKAALKKR.

The protein belongs to the MnmG family. TrmFO subfamily. The cofactor is FAD.

The protein localises to the cytoplasm. The catalysed reaction is uridine(54) in tRNA + (6R)-5,10-methylene-5,6,7,8-tetrahydrofolate + NADH + H(+) = 5-methyluridine(54) in tRNA + (6S)-5,6,7,8-tetrahydrofolate + NAD(+). The enzyme catalyses uridine(54) in tRNA + (6R)-5,10-methylene-5,6,7,8-tetrahydrofolate + NADPH + H(+) = 5-methyluridine(54) in tRNA + (6S)-5,6,7,8-tetrahydrofolate + NADP(+). In terms of biological role, catalyzes the folate-dependent formation of 5-methyl-uridine at position 54 (M-5-U54) in all tRNAs. In Methylobacterium radiotolerans (strain ATCC 27329 / DSM 1819 / JCM 2831 / NBRC 15690 / NCIMB 10815 / 0-1), this protein is Methylenetetrahydrofolate--tRNA-(uracil-5-)-methyltransferase TrmFO.